Consider the following 1374-residue polypeptide: DNA-directed RNA polymerase subunit beta' (1374 aa).

A disordered region spans residues 1 to 47; sequence MTSTSPKSRKPSTKTTKSKSKSKSKSKAAKAAAAGASPALARTPPQF. The span at 7-28 shows a compositional bias: basic residues; that stretch reads KSRKPSTKTTKSKSKSKSKSKA. Positions 29–39 are enriched in low complexity; it reads AKAAAAGASPA. Zn(2+)-binding residues include cysteine 258, cysteine 325, cysteine 332, and cysteine 335. A disordered region spans residues 1344-1374; the sequence is RPTGENELEEEQLPDPSALEGLQQEGLLTEE. The span at 1362–1374 shows a compositional bias: low complexity; it reads LEGLQQEGLLTEE.

It belongs to the RNA polymerase beta' chain family. RpoC2 subfamily. As to quaternary structure, in cyanobacteria the RNAP catalytic core is composed of 2 alpha, 1 beta, 1 beta', 1 gamma and 1 omega subunit. When a sigma factor is associated with the core the holoenzyme is formed, which can initiate transcription. It depends on Zn(2+) as a cofactor.

The catalysed reaction is RNA(n) + a ribonucleoside 5'-triphosphate = RNA(n+1) + diphosphate. In terms of biological role, DNA-dependent RNA polymerase catalyzes the transcription of DNA into RNA using the four ribonucleoside triphosphates as substrates. The sequence is that of DNA-directed RNA polymerase subunit beta' from Prochlorococcus marinus (strain MIT 9313).